Consider the following 54-residue polypeptide: UPF0391 membrane protein Pnap_0920 (54 aa).

2 consecutive transmembrane segments (helical) span residues 6 to 26 and 30 to 50; these read VVFL…IAAG and IAKI…VVSL.

Belongs to the UPF0391 family.

The protein resides in the cell membrane. The chain is UPF0391 membrane protein Pnap_0920 from Polaromonas naphthalenivorans (strain CJ2).